The primary structure comprises 124 residues: MaFF-interacting protein (124 aa).

Residues 54–96 (LVSEVEELYKSITALREKLLQAEQSLRNLKDIHMSLEKDVTAM) are a coiled coil.

Belongs to the tektin family. As to quaternary structure, interacts with MIS18A. Interacts (via its coiled-coil region) with MAFF. As to expression, strongly expressed in brain, kidney and ovary. Moderately expressed in liver, spleen, thymus, prostate, testis, small intestine and colon. Weakly expressed in heart, placenta, lung and leukocytes.

Its subcellular location is the cytoplasm. The protein localises to the nucleus. It is found in the nucleolus. Functionally, acts as a coactivator of MAFF transcriptional activity. Inhibits cell growth and colony-forming efficiency. This chain is MaFF-interacting protein (MAFIP), found in Homo sapiens (Human).